The primary structure comprises 251 residues: NADH-quinone oxidoreductase subunit B (251 aa).

Residues C38, C39, C104, and C134 each coordinate [4Fe-4S] cluster. The disordered stretch occupies residues 208-251 (RKGLPPGSMTDVGWIPPEARERLKAGRGAGASGSGEREEGKEGA). The span at 242 to 251 (GEREEGKEGA) shows a compositional bias: basic and acidic residues.

Belongs to the complex I 20 kDa subunit family. In terms of assembly, NDH-1 is composed of 14 different subunits. Subunits NuoB, C, D, E, F, and G constitute the peripheral sector of the complex. The cofactor is [4Fe-4S] cluster.

The protein resides in the cell membrane. It carries out the reaction a quinone + NADH + 5 H(+)(in) = a quinol + NAD(+) + 4 H(+)(out). In terms of biological role, NDH-1 shuttles electrons from NADH, via FMN and iron-sulfur (Fe-S) centers, to quinones in the respiratory chain. The immediate electron acceptor for the enzyme in this species is believed to be a menaquinone. Couples the redox reaction to proton translocation (for every two electrons transferred, four hydrogen ions are translocated across the cytoplasmic membrane), and thus conserves the redox energy in a proton gradient. The polypeptide is NADH-quinone oxidoreductase subunit B (Rubrobacter xylanophilus (strain DSM 9941 / JCM 11954 / NBRC 16129 / PRD-1)).